A 170-amino-acid polypeptide reads, in one-letter code: 3-dehydroquinate dehydratase (170 aa).

The Proton acceptor role is filled by Y22. Positions 76, 82, and 89 each coordinate substrate. H102 acts as the Proton donor in catalysis. Substrate is bound by residues L103–T104 and R113.

It belongs to the type-II 3-dehydroquinase family. As to quaternary structure, homododecamer.

It catalyses the reaction 3-dehydroquinate = 3-dehydroshikimate + H2O. It functions in the pathway metabolic intermediate biosynthesis; chorismate biosynthesis; chorismate from D-erythrose 4-phosphate and phosphoenolpyruvate: step 3/7. Its function is as follows. Catalyzes a trans-dehydration via an enolate intermediate. The polypeptide is 3-dehydroquinate dehydratase (aroQ) (Helicobacter pylori (strain J99 / ATCC 700824) (Campylobacter pylori J99)).